The chain runs to 40 residues: Large ribosomal subunit protein bL33c (40 aa).

This sequence belongs to the bacterial ribosomal protein bL33 family.

Its subcellular location is the plastid. It localises to the chloroplast. This is Large ribosomal subunit protein bL33c (rpl33) from Pisum sativum (Garden pea).